Here is a 337-residue protein sequence, read N- to C-terminus: Cathepsin L-like (337 aa).

An N-terminal signal peptide occupies residues 1–18 (MNRFILLALVAAVVAVNS). A propeptide spans 19–119 (AKLSRQIESA…SSFLAPFNVQ (101 aa)) (activation peptide). Residue N108 is glycosylated (N-linked (GlcNAc...) asparagine). Cystine bridges form between C141/C184, C175/C217, and C276/C326. Residue C144 is part of the active site. Active-site residues include H283 and N304.

It belongs to the peptidase C1 family. In terms of tissue distribution, expressed in intestine, pharynx posterior bulb, hypodermis and cuticle (at protein level). Expressed in germ cells, developing oocytes, sheath cells surrounding germ cells and oocytes, and in the eggshell (at protein level).

The protein resides in the secreted. It is found in the cytoplasmic granule. Its subcellular location is the lysosome. The protein localises to the endosome. It localises to the cytoplasmic vesicle. The protein resides in the phagosome. It carries out the reaction Specificity close to that of papain. As compared to cathepsin B, cathepsin L exhibits higher activity toward protein substrates, but has little activity on Z-Arg-Arg-NHMec, and no peptidyl-dipeptidase activity.. Cysteine protease which plays an essential role in the degradation of proteins in lysosomes. During early embryogenesis, maternally required for the proteolytic processing of yolk proteins in platelets, a lysosome-like structure where a slow and controlled degradation of yolk proteins occurs. In the gonad, required for the clearance of apoptotic germ cells in the engulfing cell phagolysosomes. In embryos, required for the degradation of endocytic and autophagic cargos. In embryos, may play a role in the degradation of lipid-containing droplets. Required for larval development. The polypeptide is Cathepsin L-like (Caenorhabditis elegans).